Here is a 239-residue protein sequence, read N- to C-terminus: Fatty acid metabolism regulator protein (239 aa).

Positions 6–74 (QSPAGFAEEY…HGKPTKVNNF (69 aa)) constitute an HTH gntR-type domain. Residues 34–53 (ERELSELIGVTRTTLREVLQ) constitute a DNA-binding region (H-T-H motif).

In terms of assembly, homodimer.

It is found in the cytoplasm. Functionally, multifunctional regulator of fatty acid metabolism. The sequence is that of Fatty acid metabolism regulator protein from Proteus mirabilis (strain HI4320).